A 126-amino-acid chain; its full sequence is Small ribosomal subunit protein bS6 (126 aa).

A disordered region spans residues 104 to 126 (LARRDRGDRPERPREDFGAQAQA). A compositionally biased stretch (basic and acidic residues) spans 105–120 (ARRDRGDRPERPREDF).

It belongs to the bacterial ribosomal protein bS6 family.

Its function is as follows. Binds together with bS18 to 16S ribosomal RNA. The sequence is that of Small ribosomal subunit protein bS6 from Caulobacter vibrioides (strain ATCC 19089 / CIP 103742 / CB 15) (Caulobacter crescentus).